A 390-amino-acid chain; its full sequence is MAYPGSPILMKLLVFIFLSTFVVTNVSSETKCREFKSIISFGDSIADTGNLLGLSDPKDLPHMAFPPYGENFFHHPTGRFSNGRLIIDFIAEFLGLPLVPPFYGSHNANFEKGVNFAVGGATALERSFLEDRGIHFPYTNVSLGVQLNSFKESLPSICGSPSDCRDMIENALILMGEIGGNDYNYAFFVDKGIEEIKELMPLVITTISSAITELIGMGGRTFLVPGEFPVGCSVLYLTSHQTSNMEEYDPLTGCLKWLNKFGENHGEQLRAELNRLQKLYPHVNIIYADYYNALFHLYQEPAKFGFMNRPLSACCGAGGPYNYTVGRKCGTDIVESCDDPSKYVAWDGVHMTEAAYRLMAEGILNGPYAIPPFDWSCRSSGVKNSGSSDT.

The signal sequence occupies residues 1–28 (MAYPGSPILMKLLVFIFLSTFVVTNVSS). S44 (nucleophile) is an active-site residue. N140 and N322 each carry an N-linked (GlcNAc...) asparagine glycan. Catalysis depends on residues D347 and H350.

Belongs to the 'GDSL' lipolytic enzyme family.

The protein localises to the secreted. The sequence is that of GDSL esterase/lipase At1g28580 from Arabidopsis thaliana (Mouse-ear cress).